A 121-amino-acid chain; its full sequence is uncharacterized protein (121 aa).

Residues 85–111 form a disordered region; the sequence is NANNDDYESPYKTPKIKSNPSLDSSGS. The span at 100 to 111 shows a compositional bias: polar residues; sequence IKSNPSLDSSGS.

This is an uncharacterized protein from Dictyostelium discoideum (Social amoeba).